Consider the following 263-residue polypeptide: Acyl-[acyl-carrier-protein]--UDP-N-acetylglucosamine O-acyltransferase (263 aa).

It belongs to the transferase hexapeptide repeat family. LpxA subfamily. As to quaternary structure, homotrimer.

The protein localises to the cytoplasm. It catalyses the reaction a (3R)-hydroxyacyl-[ACP] + UDP-N-acetyl-alpha-D-glucosamine = a UDP-3-O-[(3R)-3-hydroxyacyl]-N-acetyl-alpha-D-glucosamine + holo-[ACP]. The protein operates within glycolipid biosynthesis; lipid IV(A) biosynthesis; lipid IV(A) from (3R)-3-hydroxytetradecanoyl-[acyl-carrier-protein] and UDP-N-acetyl-alpha-D-glucosamine: step 1/6. Its function is as follows. Involved in the biosynthesis of lipid A, a phosphorylated glycolipid that anchors the lipopolysaccharide to the outer membrane of the cell. The protein is Acyl-[acyl-carrier-protein]--UDP-N-acetylglucosamine O-acyltransferase of Campylobacter lari (strain RM2100 / D67 / ATCC BAA-1060).